A 352-amino-acid chain; its full sequence is MASTICFILWVVFVTDTVWTRSVRQVYEASDPEDWTMHDFDCPRECFCPPSFPTALYCENRGLKEIPAIPSRIWYLYLENNLIETIPEKPFENATQLRWINLNKNKITNYGIEKGALSQLKKLLFLFLEDNELEEVPSPLPRSLEQLQLARNKVSRIPQGTFSNLENLTLLDLQHNKLLDNAFQRDTFKGLKNLMQLNMAKNALRNMPPRLPANTMQVFLDNNSIEGIPENYFNVIPKVAFLRLNHNKLSDAGLPSSGFNVSSILDLQLSHNQLTKVPKISAHLQHLHLDHNKIRNVNVSVICPSTPTTLPVEDSFSYGPHLRYLRLDGNEIKPPIPMDLMTCFRLLQAVII.

An N-terminal signal peptide occupies residues 1–20; sequence MASTICFILWVVFVTDTVWT. The 39-residue stretch at 33–71 folds into the LRRNT domain; that stretch reads EDWTMHDFDCPRECFCPPSFPTALYCENRGLKEIPAIPS. 2 cysteine pairs are disulfide-bonded: Cys-42-Cys-48 and Cys-46-Cys-58. LRR repeat units lie at residues 72–93, 96–117, 122–142, 143–164, 167–180, 193–214, 215–235, and 238–258; these read RIWY…PFEN, QLRW…KGAL, KLLF…PLPR, SLEQ…TFSN, NLTL…KLLD, NLMQ…LPAN, TMQV…YFNV, and KVAF…PSSG. N-linked (GlcNAc...) (keratan sulfate) asparagine glycosylation is present at Asn-93. Residue Asn-167 is glycosylated (N-linked (GlcNAc...) (keratan sulfate) asparagine). N-linked (GlcNAc...) asparagine glycosylation occurs at Asn-222. Residue Asn-260 is glycosylated (N-linked (GlcNAc...) (keratan sulfate) asparagine). 2 LRR repeats span residues 263–282 and 283–304; these read SILD…KISA and HLQH…VICP. The N-linked (GlcNAc...) asparagine glycan is linked to Asn-298. Residues Cys-303 and Cys-343 are joined by a disulfide bond.

This sequence belongs to the small leucine-rich proteoglycan (SLRP) family. SLRP class II subfamily. In terms of processing, binds three long, highly sulfated keratan sulfate chains in the cornea but short, non-sulfated poly(N-acetyllactosamine) chains in other tissues. Post-translationally, the N-terminus is blocked. In terms of tissue distribution, abundant in cornea and sclera but also found in other tissues.

The protein localises to the secreted. Its subcellular location is the extracellular space. The protein resides in the extracellular matrix. May be important in developing and maintaining corneal transparency and for the structure of the stromal matrix. This Bos taurus (Bovine) protein is Keratocan (KERA).